Consider the following 307-residue polypeptide: Putative gluconeogenesis factor (307 aa).

It belongs to the gluconeogenesis factor family.

It localises to the cytoplasm. Required for morphogenesis under gluconeogenic growth conditions. The protein is Putative gluconeogenesis factor of Yersinia pestis.